The sequence spans 863 residues: Glycerol-3-phosphate acyltransferase (863 aa).

A disordered region spans residues 1–29; sequence MPKKNSPLLPKETTTTQSSVDTSGSSNLT. A compositionally biased stretch (polar residues) spans 12-29; it reads ETTTTQSSVDTSGSSNLT. The HXXXXD motif motif lies at 343 to 348; sequence SHRSHI.

Belongs to the GPAT/DAPAT family.

The protein localises to the cell inner membrane. It catalyses the reaction sn-glycerol 3-phosphate + an acyl-CoA = a 1-acyl-sn-glycero-3-phosphate + CoA. It functions in the pathway phospholipid metabolism; CDP-diacylglycerol biosynthesis; CDP-diacylglycerol from sn-glycerol 3-phosphate: step 1/3. This Xylella fastidiosa (strain M12) protein is Glycerol-3-phosphate acyltransferase.